Reading from the N-terminus, the 484-residue chain is Ribosomal RNA small subunit methyltransferase F (484 aa).

S-adenosyl-L-methionine contacts are provided by residues 126–132 (AAAPGSK), E150, D177, and D195. The Nucleophile role is filled by C248.

This sequence belongs to the class I-like SAM-binding methyltransferase superfamily. RsmB/NOP family.

Its subcellular location is the cytoplasm. The enzyme catalyses cytidine(1407) in 16S rRNA + S-adenosyl-L-methionine = 5-methylcytidine(1407) in 16S rRNA + S-adenosyl-L-homocysteine + H(+). Its function is as follows. Specifically methylates the cytosine at position 1407 (m5C1407) of 16S rRNA. This is Ribosomal RNA small subunit methyltransferase F from Pectobacterium atrosepticum (strain SCRI 1043 / ATCC BAA-672) (Erwinia carotovora subsp. atroseptica).